Here is an 830-residue protein sequence, read N- to C-terminus: BLOC-2 complex member HPS5 homolog (830 aa).

WD repeat units lie at residues 25–64, 67–106, and 114–153; these read RNNS…FLAI, SQLG…STDG, and GGPA…GRNI. Residues 578 to 604 adopt a coiled-coil conformation; it reads DTETIVRLLRKLETLMEENEEPNARLK.

The protein belongs to the HPS5 family.

Its function is as follows. Has a role in the biogenesis of eye pigment granules. Eye pigment granules are specialized forms of late endosomes or lysosomes. Biogenesis of pigment granules in the eye requires molecular components required for protein delivery to lysosomes. This chain is BLOC-2 complex member HPS5 homolog, found in Anopheles gambiae (African malaria mosquito).